Reading from the N-terminus, the 104-residue chain is Large ribosomal subunit protein uL24 (104 aa).

The protein belongs to the universal ribosomal protein uL24 family. As to quaternary structure, part of the 50S ribosomal subunit.

Functionally, one of two assembly initiator proteins, it binds directly to the 5'-end of the 23S rRNA, where it nucleates assembly of the 50S subunit. Its function is as follows. One of the proteins that surrounds the polypeptide exit tunnel on the outside of the subunit. The chain is Large ribosomal subunit protein uL24 from Buchnera aphidicola subsp. Schizaphis graminum (strain Sg).